The following is an 828-amino-acid chain: Cadherin-22 (828 aa).

The first 34 residues, 1-34 (MRPRPEGRGLRAGVALSPALLLLLLLPPPPTLLG), serve as a signal peptide directing secretion. Residues 36-624 (LWAAGTPSPS…AFVMAASLSP (589 aa)) lie on the Extracellular side of the membrane. 5 consecutive Cadherin domains span residues 64–168 (WVWN…EPRF), 169–277 (LHGP…PPRF), 278–394 (PQKM…PPEF), 395–498 (RPPS…NPPE), and 499–616 (LATP…TTAF). Asn162 carries an N-linked (GlcNAc...) asparagine glycan. 2 N-linked (GlcNAc...) asparagine glycosylation sites follow: Asn466 and Asn612. A helical transmembrane segment spans residues 625-645 (GALIALLVCVLILVVLVLLIL). Residues 646–828 (TLRRHHKSHL…HRGDDEAQAS (183 aa)) lie on the Cytoplasmic side of the membrane. Over residues 702-719 (GGGSAGGGAGGGSGGGAG) the composition is skewed to gly residues. Positions 702–745 (GGGSAGGGAGGGSGGGAGSPPQAHLPSERHSLPQGPPSPEPDFS) are disordered.

The protein localises to the cell membrane. Cadherins are calcium-dependent cell adhesion proteins. They preferentially interact with themselves in a homophilic manner in connecting cells; cadherins may thus contribute to the sorting of heterogeneous cell types. PB-cadherins may have a role in the morphological organization of pituitary gland and brain tissues. The chain is Cadherin-22 (CDH22) from Homo sapiens (Human).